The primary structure comprises 138 residues: ATP synthase epsilon chain (138 aa).

It belongs to the ATPase epsilon chain family. F-type ATPases have 2 components, CF(1) - the catalytic core - and CF(0) - the membrane proton channel. CF(1) has five subunits: alpha(3), beta(3), gamma(1), delta(1), epsilon(1). CF(0) has four main subunits: a(1), b(1), b'(1) and c(9-12).

Its subcellular location is the cellular thylakoid membrane. Its function is as follows. Produces ATP from ADP in the presence of a proton gradient across the membrane. The complex from the organism is particularly stable to disruption and remains functional after 6 hours at 55 degrees Celsius. The protein is ATP synthase epsilon chain of Thermosynechococcus vestitus (strain NIES-2133 / IAM M-273 / BP-1).